Consider the following 321-residue polypeptide: Glucokinase (321 aa).

8 to 13 contributes to the ATP binding site; the sequence is GDVGGT.

Belongs to the bacterial glucokinase family.

It is found in the cytoplasm. It catalyses the reaction D-glucose + ATP = D-glucose 6-phosphate + ADP + H(+). The chain is Glucokinase from Shigella dysenteriae serotype 1 (strain Sd197).